Here is a 619-residue protein sequence, read N- to C-terminus: Sodium-coupled monocarboxylate transporter 2 (619 aa).

The Extracellular portion of the chain corresponds to 1–9; sequence MRVKNFEAW. Residues 10 to 30 form a helical membrane-spanning segment; sequence DYVVFAGLFVISSGIGVFFAI. The Cytoplasmic portion of the chain corresponds to 31-47; it reads KERKKTTSREFLVGGRQ. Residues 48-68 traverse the membrane as a helical segment; sequence MSFGPVALSLTASFMSAVTVL. The Extracellular segment spans residues 69-80; sequence GTPAEVYRFGAS. A helical membrane pass occupies residues 81–101; that stretch reads FFLFLISYVFVVFFTSELFLP. Residues 102-128 lie on the Cytoplasmic side of the membrane; it reads VFYRSGITSTYEYLQLRFNKPVRYAAT. A helical membrane pass occupies residues 129–149; that stretch reads IIYIVQTILYTGVVVYAPALA. The Extracellular segment spans residues 150 to 157; sequence LNQVTGFN. The chain crosses the membrane as a helical span at residues 158–178; sequence LWASVFATGIVCTFYCSLGGL. Over 179–180 the chain is Cytoplasmic; the sequence is KA. Residues 181–201 form a helical membrane-spanning segment; sequence VVWTDAFQMVVMIVGFLTVLI. At 202-235 the chain is on the extracellular side; sequence QGSNHVGGFNNVLEKAGNGSRLHIVDFDVDPLRR. An N-linked (GlcNAc...) asparagine glycan is attached at Asn-219. The helical transmembrane segment at 236–256 threads the bilayer; the sequence is HTFWTITIGGTFTWLGVYGVN. The Cytoplasmic portion of the chain corresponds to 257 to 275; the sequence is QSTIQRCISCKTEKHAKLA. A helical transmembrane segment spans residues 276 to 296; it reads LYFNLLGLWIIVACAVFSGLI. Residues 297–321 lie on the Extracellular side of the membrane; sequence MYSHFKDCDPWTSGVISAPDQLMPY. A helical membrane pass occupies residues 322 to 342; sequence FVMEIFATMPGLPGLFVACAF. The Cytoplasmic portion of the chain corresponds to 343-385; it reads SGTLSTVAASINALATVTFEDFVKSCFPHLSDKLSTWISKGLC. Residues 386–406 form a helical membrane-spanning segment; that stretch reads ILFGIMCTSMAVVASLMGSVV. The Extracellular portion of the chain corresponds to 407–411; that stretch reads QAALS. The helical transmembrane segment at 412–432 threads the bilayer; it reads IHGMCGGPMLGLFTLGLVFPF. Residues 433–437 are Cytoplasmic-facing; it reads VNWKG. The chain crosses the membrane as a helical span at residues 438-458; sequence ALGGLLTGITLSFWVAIGSFI. Residues 459–504 lie on the Extracellular side of the membrane; the sequence is YPAPESKTLPLPLSTEHCVELNITTTVAPQISSRPVLADTWYSLSY. An N-linked (GlcNAc...) asparagine glycan is attached at Asn-480. The helical transmembrane segment at 505–525 threads the bilayer; the sequence is LYFSAVGCLGCIAAGIIISFL. Topologically, residues 526-619 are cytoplasmic; sequence TGKQRGKDID…NSVPEKTTYF (94 aa).

It belongs to the sodium:solute symporter (SSF) (TC 2.A.21) family. In terms of tissue distribution, expressed in the cortical region of the kidney corresponding to the proximal tubule. Expressed in Mueller cells of the inner retina (at protein level). Isoform 1 is expressed in the retina, kidney, small intestine and skeletal muscle. Isoform 2 is not detected in the kidney, small intestine and skeletal muscle. In the kidney, expressed predominantly in tubular epithelial cells of the cortical region and in the convoluted portions of the proximal tubule (pars convoluta). In the small intestine, its expression is highest in the proximal part and gradually decreased towards the distal end. Expressed in the neural retina. Not detected in the caecum and colon.

It localises to the apical cell membrane. It carries out the reaction (S)-lactate(out) + Na(+)(out) = (S)-lactate(in) + Na(+)(in). The catalysed reaction is nicotinate(out) + Na(+)(out) = nicotinate(in) + Na(+)(in). The enzyme catalyses pyruvate(out) + Na(+)(out) = pyruvate(in) + Na(+)(in). It catalyses the reaction propanoate(out) + Na(+)(out) = propanoate(in) + Na(+)(in). It carries out the reaction butanoate(out) + Na(+)(out) = butanoate(in) + Na(+)(in). The catalysed reaction is acetoacetate(out) + Na(+)(out) = acetoacetate(in) + Na(+)(in). Acts as an electroneutral and low-affinity sodium (Na(+))-dependent sodium-coupled solute transporter. Catalyzes the transport across the plasma membrane of many monocarboxylates such as lactate, pyruvate, nicotinate, propionate, butyrate and beta-D-hydroxybutyrate. May be responsible for the first step of reabsorption of monocarboxylates from the lumen of the proximal tubule of the kidney and the small intestine. May play also a role in monocarboxylates transport in the retina. Mediates electroneutral uptake of lactate, with a stoichiometry of 2 Na(+) for each lactate. This chain is Sodium-coupled monocarboxylate transporter 2 (Slc5a12), found in Mus musculus (Mouse).